Reading from the N-terminus, the 295-residue chain is Probable dTDP-4,6-dihydroxy-2-methyloxan-3-one 4-ketoreductase (295 aa).

Residues 10–12 (GML), 36–37 (DV), 60–62 (AYT), Tyr126, and Lys130 each bind NADH. NADPH-binding positions include 11 to 12 (ML), 36 to 37 (DV), 60 to 62 (AYT), Tyr126, and Lys130. The active-site Proton donor/acceptor is Tyr126.

Belongs to the dTDP-4-dehydrorhamnose reductase family. Mg(2+) serves as cofactor.

It participates in antibiotic biosynthesis. Its function is as follows. Involved in the biosynthesis of one of the two 2,6-deoxysugars, dTDP-L-oleandrose, attached to the macrolactone ring oleandolide to produce the aglycone antibiotic oleandomycin. Probably catalyzes the reduction of dTDP-4-keto-2,6-dideoxy-beta-L-galactose to yield dTDP-L-olivose. The protein is Probable dTDP-4,6-dihydroxy-2-methyloxan-3-one 4-ketoreductase of Streptomyces antibioticus.